The sequence spans 463 residues: Hydroxyacid-oxoacid transhydrogenase, mitochondrial (463 aa).

It belongs to the iron-containing alcohol dehydrogenase family. Hydroxyacid-oxoacid transhydrogenase subfamily.

The protein resides in the mitochondrion. It catalyses the reaction (S)-3-hydroxybutanoate + 2-oxoglutarate = (R)-2-hydroxyglutarate + acetoacetate. The catalysed reaction is 4-hydroxybutanoate + 2-oxoglutarate = (R)-2-hydroxyglutarate + succinate semialdehyde. In terms of biological role, catalyzes the cofactor-independent reversible oxidation of gamma-hydroxybutyrate (GHB) to succinic semialdehyde (SSA) coupled to reduction of 2-ketoglutarate (2-KG) to D-2-hydroxyglutarate (D-2-HG). L-3-hydroxybutyrate (L-3-OHB) is also a substrate for HOT when using 2-KG as hydrogen acceptor, resulting in the formation of D-2-HG. In Xenopus tropicalis (Western clawed frog), this protein is Hydroxyacid-oxoacid transhydrogenase, mitochondrial (adhfe1).